A 365-amino-acid polypeptide reads, in one-letter code: UDP-N-acetylglucosamine--N-acetylmuramyl-(pentapeptide) pyrophosphoryl-undecaprenol N-acetylglucosamine transferase (365 aa).

UDP-N-acetyl-alpha-D-glucosamine contacts are provided by residues 17–19 (TGG), Asn-129, Arg-167, Ser-194, Ile-250, 269–274 (ALTVSE), and Gln-295.

The protein belongs to the glycosyltransferase 28 family. MurG subfamily.

The protein resides in the cell inner membrane. It carries out the reaction di-trans,octa-cis-undecaprenyl diphospho-N-acetyl-alpha-D-muramoyl-L-alanyl-D-glutamyl-meso-2,6-diaminopimeloyl-D-alanyl-D-alanine + UDP-N-acetyl-alpha-D-glucosamine = di-trans,octa-cis-undecaprenyl diphospho-[N-acetyl-alpha-D-glucosaminyl-(1-&gt;4)]-N-acetyl-alpha-D-muramoyl-L-alanyl-D-glutamyl-meso-2,6-diaminopimeloyl-D-alanyl-D-alanine + UDP + H(+). It participates in cell wall biogenesis; peptidoglycan biosynthesis. Functionally, cell wall formation. Catalyzes the transfer of a GlcNAc subunit on undecaprenyl-pyrophosphoryl-MurNAc-pentapeptide (lipid intermediate I) to form undecaprenyl-pyrophosphoryl-MurNAc-(pentapeptide)GlcNAc (lipid intermediate II). The protein is UDP-N-acetylglucosamine--N-acetylmuramyl-(pentapeptide) pyrophosphoryl-undecaprenol N-acetylglucosamine transferase of Shewanella woodyi (strain ATCC 51908 / MS32).